Here is a 77-residue protein sequence, read N- to C-terminus: RNA-binding protein Hfq (77 aa).

The Sm domain maps to aspartate 10 to isoleucine 70.

Belongs to the Hfq family. As to quaternary structure, homohexamer.

In terms of biological role, RNA chaperone that binds small regulatory RNA (sRNAs) and mRNAs to facilitate mRNA translational regulation in response to envelope stress, environmental stress and changes in metabolite concentrations. Also binds with high specificity to tRNAs. In Jannaschia sp. (strain CCS1), this protein is RNA-binding protein Hfq.